The following is a 571-amino-acid chain: MNQTRVFLIFAWLMVAVLLWMEWSREKAAPTPAPTTTSAPAAAQSVPGATPGSVPNAQVPGAPGQAAVQAQASATPASQRVTVTTDVLRLVLDGGRVLDAELLQFPQTKDEGSPPVRLLTEDPAHPYSAISGWASEDKNTPVPGADGFKLVGDTKDFVLAKGQNELQIPFVWTADSGVTIKRTLTVSRNEYAVRFKDEVSNTGAAPWNGYVYRTLDRTPTILSRSMTNPDSFSFNGATWYDNDKKYQRRAFKDYLEDGTLNQNITGGWLAMLQHHFFTAWIPQKDQTAHYVLSQVAGRDLIEARGPAFTVAPGQSTSTEARLWVGPKLVNLIAKEDVPGLDRVVDYSRFSMMAVIGQGLFWVLNQVHKLVGNWGWAIVGLVVLLKLVLYPLSATQYKSGAKMRRFQPRIAQLKERYGDDRQKFQTAMMELYKKEKINPMGGCLPILIQMPIFFALYWVLVESVELRQAPWFGWIQDLTARDPYFILPVINVAVMWFTQKLTPAPGMDPMQQKMMQFMPLVFGVMMAFMPSGLVLYWVVNGGLGLLQQWWMTKRHGGEPVPATTAPAPVKKK.

A helical transmembrane segment spans residues 4–24 (TRVFLIFAWLMVAVLLWMEWS). The interval 29–76 (APTPAPTTTSAPAAAQSVPGATPGSVPNAQVPGAPGQAAVQAQASATP) is disordered. 2 stretches are compositionally biased toward low complexity: residues 34-43 (PTTTSAPAAA) and 57-76 (AQVPGAPGQAAVQAQASATP). 4 consecutive transmembrane segments (helical) span residues 369–389 (LVGNWGWAIVGLVVLLKLVLY), 440–460 (GGCLPILIQMPIFFALYWVLV), 483–503 (YFILPVINVAVMWFTQKLTPA), and 518–538 (PLVFGVMMAFMPSGLVLYWVV).

The protein belongs to the OXA1/ALB3/YidC family. Type 1 subfamily. In terms of assembly, interacts with the Sec translocase complex via SecD. Specifically interacts with transmembrane segments of nascent integral membrane proteins during membrane integration.

It localises to the cell inner membrane. Functionally, required for the insertion and/or proper folding and/or complex formation of integral membrane proteins into the membrane. Involved in integration of membrane proteins that insert both dependently and independently of the Sec translocase complex, as well as at least some lipoproteins. Aids folding of multispanning membrane proteins. The polypeptide is Membrane protein insertase YidC (Stenotrophomonas maltophilia (strain R551-3)).